We begin with the raw amino-acid sequence, 902 residues long: Translation initiation factor IF-2 (902 aa).

The segment covering 137 to 177 (NLDEQQRLAESDRARDEAIQRKRDEEQAAKDRVEAERKAAE) has biased composition (basic and acidic residues). Disordered stretches follow at residues 137-248 (NLDE…SHVM) and 266-314 (HLSA…ERPT). 2 stretches are compositionally biased toward low complexity: residues 178–229 (EAAA…ATPA) and 279–291 (RGKP…SSSS). In terms of domain architecture, tr-type G spans 401–570 (SRPPVVTIMG…SLQAEVLELK (170 aa)). The interval 410–417 (GHVDHGKT) is G1. 410–417 (GHVDHGKT) contacts GTP. Residues 435–439 (GITQH) are G2. A G3 region spans residues 456–459 (DTPG). Residues 456–460 (DTPGH) and 510–513 (NKID) contribute to the GTP site. Positions 510 to 513 (NKID) are G4. Positions 546-548 (SAK) are G5.

Belongs to the TRAFAC class translation factor GTPase superfamily. Classic translation factor GTPase family. IF-2 subfamily.

The protein localises to the cytoplasm. Its function is as follows. One of the essential components for the initiation of protein synthesis. Protects formylmethionyl-tRNA from spontaneous hydrolysis and promotes its binding to the 30S ribosomal subunits. Also involved in the hydrolysis of GTP during the formation of the 70S ribosomal complex. The protein is Translation initiation factor IF-2 of Xanthomonas campestris pv. campestris (strain 8004).